The chain runs to 93 residues: Putative regulatory protein LA_2599 (93 aa).

Belongs to the RemA family.

The protein is Putative regulatory protein LA_2599 of Leptospira interrogans serogroup Icterohaemorrhagiae serovar Lai (strain 56601).